The sequence spans 95 residues: Parvalbumin beta 3 (95 aa).

Alanine 1 carries the post-translational modification N-acetylalanine. 2 EF-hand domains span residues 39–66 (FFAI…FSAG) and 77–95 (DVDG…LVKA). Ca(2+)-binding residues include aspartate 44, aspartate 46, serine 48, phenylalanine 50, glutamate 52, glutamate 55, aspartate 77, aspartate 79, aspartate 81, methionine 83, and glutamate 88.

It belongs to the parvalbumin family.

Functionally, in muscle, parvalbumin is thought to be involved in relaxation after contraction. It binds two calcium ions. This is Parvalbumin beta 3 from Merluccius paradoxus (Deep-water Cape hake).